The primary structure comprises 318 residues: Ribose-phosphate pyrophosphokinase 2 (318 aa).

Positions 132, 134, 143, and 147 each coordinate Mg(2+).

Belongs to the ribose-phosphate pyrophosphokinase family.

It localises to the cytoplasm. It carries out the reaction D-ribose 5-phosphate + ATP = 5-phospho-alpha-D-ribose 1-diphosphate + AMP + H(+). It functions in the pathway metabolic intermediate biosynthesis; 5-phospho-alpha-D-ribose 1-diphosphate biosynthesis; 5-phospho-alpha-D-ribose 1-diphosphate from D-ribose 5-phosphate (route I): step 1/1. Functionally, 5-phosphoribose 1-diphosphate synthase involved in nucleotide, histidine, and tryptophan biosynthesis. Active in heteromultimeric complexes with other 5-phosphoribose 1-diphosphate synthases (PRS2, PRS3, PRS4 and PRS5). This Saccharomyces cerevisiae (strain ATCC 204508 / S288c) (Baker's yeast) protein is Ribose-phosphate pyrophosphokinase 2 (PRS2).